The chain runs to 399 residues: MSDILRELLCVSEKAANIARACRQQEALFQLLIEEKKEGEKNKKFAVDFKTLADVLVQEVIKQNMENKFPGLEKNIFGEESNEFTNDWGEKITLRLCSTEEETAELLSKVLNGNKVASEALARVVHQDVAFTDPTLDSTEINVPQDILGIWVDPIDSTYQYIKGSADIKSNQGIFPCGLQCVTILIGVYDIQTGVPLMGVINQPFVSRDPNTLRWKGQCYWGLSYMGTNMHSLQLTISRRNGSETHTGNTGSEAAFSPSFSAVISTSEKETIKAALSRVCGDRIFGAAGAGYKSLCVVQGLVDIYIFSEDTTFKWDSCAAHAILRAMGGGIVDLKECLERNPETGLDLPQLVYHVENEGAAGVDRWANKGGLIAYRSRKRLETFLSLLVQNLAPAETHT.

Position 54 (aspartate 54) interacts with Li(+). Glutamate 79 lines the Mg(2+) pocket. Glutamate 80 contacts Li(+). The Mg(2+) site is built by aspartate 153 and isoleucine 155. 1D-myo-inositol 1,4-bisphosphate is bound by residues aspartate 156, serine 157, threonine 158, serine 267, lysine 269, glycine 289, alanine 290, lysine 293, and threonine 311. Aspartate 316 contributes to the Mg(2+) binding site. A Phosphoserine modification is found at serine 317.

It belongs to the inositol monophosphatase superfamily. Monomer. The cofactor is Mg(2+). Ubiquitously expressed, with highest levels in pancreas and kidney.

The enzyme catalyses 1D-myo-inositol 1,4-bisphosphate + H2O = 1D-myo-inositol 4-phosphate + phosphate. The catalysed reaction is 1D-myo-inositol 1,3,4-trisphosphate + H2O = 1D-myo-inositol 3,4-bisphosphate + phosphate. Its pathway is signal transduction; phosphatidylinositol signaling pathway. With respect to regulation, inhibited by Li(+). Mg(2+)-dependent phosphatase that catalyzes the hydrolysis of the 1-position phosphate from inositol 1,4-bisphosphate and inositol 1,3,4-trisphosphate and participates in inositol phosphate metabolism. The protein is Inositol polyphosphate 1-phosphatase of Homo sapiens (Human).